Here is a 205-residue protein sequence, read N- to C-terminus: Holliday junction branch migration complex subunit RuvA (205 aa).

The domain I stretch occupies residues 1-64 (MIGRLRGVLI…EDAQLLYGFI (64 aa)). Residues 65 to 143 (TKKERSLFRL…SLMEASVGSE (79 aa)) are domain II. The segment at 144–156 (REFVLQSNYSPAP) is flexible linker. Residues 157 to 205 (TVNSAEEDAISALLSLGYKPPQASKAVSAAYKEGMDSETLIKAALKSML) are domain III.

It belongs to the RuvA family. As to quaternary structure, homotetramer. Forms an RuvA(8)-RuvB(12)-Holliday junction (HJ) complex. HJ DNA is sandwiched between 2 RuvA tetramers; dsDNA enters through RuvA and exits via RuvB. An RuvB hexamer assembles on each DNA strand where it exits the tetramer. Each RuvB hexamer is contacted by two RuvA subunits (via domain III) on 2 adjacent RuvB subunits; this complex drives branch migration. In the full resolvosome a probable DNA-RuvA(4)-RuvB(12)-RuvC(2) complex forms which resolves the HJ.

The protein localises to the cytoplasm. Functionally, the RuvA-RuvB-RuvC complex processes Holliday junction (HJ) DNA during genetic recombination and DNA repair, while the RuvA-RuvB complex plays an important role in the rescue of blocked DNA replication forks via replication fork reversal (RFR). RuvA specifically binds to HJ cruciform DNA, conferring on it an open structure. The RuvB hexamer acts as an ATP-dependent pump, pulling dsDNA into and through the RuvAB complex. HJ branch migration allows RuvC to scan DNA until it finds its consensus sequence, where it cleaves and resolves the cruciform DNA. This Shewanella sp. (strain MR-4) protein is Holliday junction branch migration complex subunit RuvA.